The sequence spans 1222 residues: Probable disease resistance protein At5g45510 (1222 aa).

49 to 56 lines the ATP pocket; the sequence is GEAGIGKT. Residues 122-183 are a coiled coil; that stretch reads GERDEDEEEE…KLEAEKKLVD (62 aa). Basic and acidic residues-rich tracts occupy residues 171–205, 212–224, 263–279, and 286–322; these read AAEKLEAEKKLVDPAAKKAKDHGNKNPTDAAKEKT, GEDKAQTSSERKP, RRQETEEATKSGEHAEG, and SGEKKEDTDGEDEIRSADKEEPESQARVKTEEKHEKV. Disordered regions lie at residues 171–225 and 263–327; these read AAEK…RKPY and RRQE…PPTI. At T293 the chain carries Phosphothreonine. LRR repeat units lie at residues 654-676, 677-699, 702-724, 725-747, 785-806, 813-835, 836-856, 861-883, 884-906, 907-929, and 931-951; these read LLRVLIIRDCDLLKSIEELKALT, KLNTLEVSGASSLSKISEKFFES, ELRSLHLSGLKIESSPPSISGLK, ELHCLIIKDCPLLQDLPNIQELV, KLQHLDFSGSQIERLPIFQDSA, SLTRLLLRNCSKLRRLPSLKPLS, GLQILDLSGTTSLVEMLEVCF, ELKTLNLSGTNLSELATTIEDLS, SLNELLLRDCINLDAIPNIEKLE, NLEVIDVSGSAKLAKIEGSFEKM, and YLRVVDLSGTQVETPELPADT.

This sequence belongs to the disease resistance NB-LRR family.

Functionally, probable disease resistance protein. The polypeptide is Probable disease resistance protein At5g45510 (Arabidopsis thaliana (Mouse-ear cress)).